We begin with the raw amino-acid sequence, 398 residues long: Elongation factor Tu (398 aa).

The tr-type G domain occupies 10 to 207 (KPHVNIGTIG…TVDEYIPEPE (198 aa)). The G1 stretch occupies residues 19–26 (GHVDHGKT). 19–26 (GHVDHGKT) is a GTP binding site. Threonine 26 is a Mg(2+) binding site. The G2 stretch occupies residues 63–67 (GITIN). Residues 84-87 (DAPG) form a G3 region. Residues 84–88 (DAPGH) and 139–142 (NKVD) each bind GTP. Residues 139–142 (NKVD) form a G4 region. Positions 177–179 (SAL) are G5.

The protein belongs to the TRAFAC class translation factor GTPase superfamily. Classic translation factor GTPase family. EF-Tu/EF-1A subfamily. As to quaternary structure, monomer.

The protein localises to the cytoplasm. It catalyses the reaction GTP + H2O = GDP + phosphate + H(+). GTP hydrolase that promotes the GTP-dependent binding of aminoacyl-tRNA to the A-site of ribosomes during protein biosynthesis. The protein is Elongation factor Tu of Streptococcus agalactiae serotype Ia (strain ATCC 27591 / A909 / CDC SS700).